We begin with the raw amino-acid sequence, 775 residues long: Thiamine repressible genes regulatory protein thi1 (775 aa).

Residues 39–65 constitute a DNA-binding region (zn(2)-C6 fungal-type); that stretch reads CKHCRQKKIKCNGGQPCISCKTLNIEC. At S208 the chain carries Phosphoserine. Disordered regions lie at residues 676–695 and 754–775; these read LTGESSNGSNSTPNEAFQPF and NVSEQSSHTAEQTSNLTLEKNG.

It is found in the nucleus. Transcription factor that activates the nmt1 promoter. Regulation of thiamine repressible genes. Positively regulates conjugation during meiosis. In Schizosaccharomyces pombe (strain 972 / ATCC 24843) (Fission yeast), this protein is Thiamine repressible genes regulatory protein thi1 (thi1).